Consider the following 122-residue polypeptide: Large ribosomal subunit protein uL14 (122 aa).

Belongs to the universal ribosomal protein uL14 family. As to quaternary structure, part of the 50S ribosomal subunit. Forms a cluster with proteins L3 and L19. In the 70S ribosome, L14 and L19 interact and together make contacts with the 16S rRNA in bridges B5 and B8.

Binds to 23S rRNA. Forms part of two intersubunit bridges in the 70S ribosome. This chain is Large ribosomal subunit protein uL14, found in Shouchella clausii (strain KSM-K16) (Alkalihalobacillus clausii).